The primary structure comprises 87 residues: U14-lycotoxin-Ls1b (87 aa).

Residues 1-20 (MNSKVFAVLLLLALSTCVLS) form the signal peptide. The 46-residue stretch at 21 to 66 (EKYCPTPRNTSCKKMNIRNNCCRDSDCTSNAFCCAEPCGNFCHKAS) folds into the WAP domain. 5 cysteine pairs are disulfide-bonded: Cys-24–Cys-54, Cys-32–Cys-58, Cys-41–Cys-53, Cys-42–Cys-80, and Cys-47–Cys-62.

Belongs to the venom protein 11 family. 01 (wap-1) subfamily. Contains 5 disulfide bonds. In terms of tissue distribution, expressed by the venom gland.

The protein resides in the secreted. Has antibacterial activity. This is U14-lycotoxin-Ls1b from Lycosa singoriensis (Wolf spider).